Consider the following 1487-residue polypeptide: Murinoglobulin-1 (1487 aa).

The signal sequence occupies residues 1–24 (MKKNREAQLCLFSALLAFLPFASL). A disulfide bridge connects residues Cys48 and Cys86. Residues Asn55 and Asn247 are each glycosylated (N-linked (GlcNAc...) asparagine). 2 disulfide bridges follow: Cys251-Cys283 and Cys269-Cys295. Residues Asn301, Asn321, Asn393, and Asn508 are each glycosylated (N-linked (GlcNAc...) asparagine). 3 disulfide bridges follow: Cys468–Cys563, Cys595–Cys784, and Cys643–Cys689. The interval 686–745 (PTYCYEMNMVVLSAPAVESELSPRGGEFEMMPLGVNKSPLPKEPPRKDPPPKDPVIETIR) is bait region. N-linked (GlcNAc...) asparagine glycans are attached at residues Asn760, Asn787, and Asn882. Intrachain disulfides connect Cys860–Cys896, Cys934–Cys1334, Cys1092–Cys1140, and Cys1365–Cys1480. The isoglutamyl cysteine thioester (Cys-Gln) cross-link spans 985–988 (CGEQ). N-linked (GlcNAc...) asparagine glycosylation occurs at Asn1004. Residues Asn1153, Asn1324, and Asn1437 are each glycosylated (N-linked (GlcNAc...) asparagine).

This sequence belongs to the protease inhibitor I39 (alpha-2-macroglobulin) family. In terms of assembly, monomer. Plasma.

The protein localises to the secreted. A proteinase activates the inhibitor by specific proteolysis in the bait region, which, by an unknown mechanism leads to reaction at the cysteinyl-glutamyl internal thiol ester site and to a conformational change, whereby the proteinase is trapped and/or covalently bound to the inhibitor. While in the tetrameric proteinase inhibitors steric inhibition is sufficiently strong, monomeric forms need a covalent linkage between the activated glutamyl residue of the original thiol ester and a terminal amino group of a lysine or another nucleophilic group on the proteinase, for inhibition to be effective. The polypeptide is Murinoglobulin-1 (Rattus norvegicus (Rat)).